A 220-amino-acid polypeptide reads, in one-letter code: MFKQIDENYLRKEHFHHYMTLTRCSYSLVINLDITKLHAILKEKKLKVYPVQIYLLARAVQKIPEFRMDQVNDELGYWEILHPSYTILNKETKTFSSIWTPFDENFAQFYKSCVADIETFSKSSNLFPKPHMPENMFNISSLPWIDFTSFNLNVSTDEAYLLPIFTIGKFKVEEGKIILPVAIQVHHAVCDGYHAGQYVEYLRWLIEHCDEWLNDSLHIT.

His187 serves as the catalytic Proton acceptor.

The protein belongs to the chloramphenicol acetyltransferase family. In terms of assembly, homotrimer.

It carries out the reaction chloramphenicol + acetyl-CoA = chloramphenicol 3-acetate + CoA. This enzyme is an effector of chloramphenicol resistance in bacteria. In Bacillus pumilus (Bacillus mesentericus), this protein is Chloramphenicol acetyltransferase (cat86).